The following is a 360-amino-acid chain: Holliday junction branch migration complex subunit RuvB (360 aa).

A disordered region spans residues 1 to 23 (MIASVGDSRYYPKSVANGEKSDQ). Residues 12–204 (PKSVANGEKS…FGIVLRLEFY (193 aa)) form a large ATPase domain (RuvB-L) region. ATP contacts are provided by residues L43, R44, G85, K88, T89, T90, 151 to 153 (EDY), R194, Y204, and R241. T89 lines the Mg(2+) pocket. The tract at residues 205–275 (TTEDLKIILK…TAQKALEMLE (71 aa)) is small ATPAse domain (RuvB-S). The tract at residues 278-360 (QHGFDEVDRR…KPPKKQDSLF (83 aa)) is head domain (RuvB-H). R333 and R338 together coordinate DNA.

This sequence belongs to the RuvB family. In terms of assembly, homohexamer. Forms an RuvA(8)-RuvB(12)-Holliday junction (HJ) complex. HJ DNA is sandwiched between 2 RuvA tetramers; dsDNA enters through RuvA and exits via RuvB. An RuvB hexamer assembles on each DNA strand where it exits the tetramer. Each RuvB hexamer is contacted by two RuvA subunits (via domain III) on 2 adjacent RuvB subunits; this complex drives branch migration. In the full resolvosome a probable DNA-RuvA(4)-RuvB(12)-RuvC(2) complex forms which resolves the HJ.

The protein resides in the cytoplasm. The catalysed reaction is ATP + H2O = ADP + phosphate + H(+). The RuvA-RuvB-RuvC complex processes Holliday junction (HJ) DNA during genetic recombination and DNA repair, while the RuvA-RuvB complex plays an important role in the rescue of blocked DNA replication forks via replication fork reversal (RFR). RuvA specifically binds to HJ cruciform DNA, conferring on it an open structure. The RuvB hexamer acts as an ATP-dependent pump, pulling dsDNA into and through the RuvAB complex. RuvB forms 2 homohexamers on either side of HJ DNA bound by 1 or 2 RuvA tetramers; 4 subunits per hexamer contact DNA at a time. Coordinated motions by a converter formed by DNA-disengaged RuvB subunits stimulates ATP hydrolysis and nucleotide exchange. Immobilization of the converter enables RuvB to convert the ATP-contained energy into a lever motion, pulling 2 nucleotides of DNA out of the RuvA tetramer per ATP hydrolyzed, thus driving DNA branch migration. The RuvB motors rotate together with the DNA substrate, which together with the progressing nucleotide cycle form the mechanistic basis for DNA recombination by continuous HJ branch migration. Branch migration allows RuvC to scan DNA until it finds its consensus sequence, where it cleaves and resolves cruciform DNA. The polypeptide is Holliday junction branch migration complex subunit RuvB (Koribacter versatilis (strain Ellin345)).